A 270-amino-acid chain; its full sequence is Putative carboxymethylenebutenolidase (270 aa).

Active-site residues include C147, D204, and H236.

It belongs to the dienelactone hydrolase family.

The catalysed reaction is 2-(5-oxo-2,5-dihydrofuran-2-ylidene)acetate + H2O = 4-oxohex-2-enedioate + H(+). In Salmonella typhimurium (strain LT2 / SGSC1412 / ATCC 700720), this protein is Putative carboxymethylenebutenolidase (ysgA).